The chain runs to 200 residues: Snake venom metalloproteinase rhomb-I (200 aa).

In terms of domain architecture, Peptidase M12B spans 4–200 (KYIELVVVAD…RKPQCILNKP (197 aa)). Positions 7 and 91 each coordinate Ca(2+). Intrachain disulfides connect C115-C195, C155-C179, and C157-C162. H140 serves as a coordination point for Zn(2+). Residue E141 is part of the active site. The Zn(2+) site is built by H144 and H150. Ca(2+)-binding residues include C195 and N198.

In terms of assembly, monomer. It depends on Zn(2+) as a cofactor. In terms of tissue distribution, expressed by the venom gland.

It localises to the secreted. In terms of biological role, snake venom zinc metalloproteinase that induces hemorrhage. This is Snake venom metalloproteinase rhomb-I from Lachesis muta rhombeata (Bushmaster).